We begin with the raw amino-acid sequence, 460 residues long: Receptor-like cytosolic serine/threonine-protein kinase RBK2 (460 aa).

Residues 1–67 (MNSASAHDLR…DADTDVQCKN (67 aa)) form a disordered region. A compositionally biased stretch (basic and acidic residues) spans 7–23 (HDLRLLEVDKEKQDPKS). The region spanning 143–415 (FSPENIIGRG…VELLLGHEDV (273 aa)) is the Protein kinase domain. Residues 149-157 (IGRGGYADV) and lysine 171 each bind ATP. Aspartate 267 (proton acceptor) is an active-site residue. Threonine 307 is subject to Phosphothreonine. Position 315 is a phosphotyrosine (tyrosine 315).

Belongs to the protein kinase superfamily. Ser/Thr protein kinase family. Interacts with ARAC5 and ARAC10.

It localises to the cytoplasm. It carries out the reaction L-seryl-[protein] + ATP = O-phospho-L-seryl-[protein] + ADP + H(+). It catalyses the reaction L-threonyl-[protein] + ATP = O-phospho-L-threonyl-[protein] + ADP + H(+). The polypeptide is Receptor-like cytosolic serine/threonine-protein kinase RBK2 (RBK2) (Arabidopsis thaliana (Mouse-ear cress)).